We begin with the raw amino-acid sequence, 258 residues long: Ribosomal RNA small subunit methyltransferase J (258 aa).

S-adenosyl-L-methionine-binding positions include 106-107, 122-123, and aspartate 181; these read RD and ER.

The protein belongs to the methyltransferase superfamily. RsmJ family.

The protein localises to the cytoplasm. The enzyme catalyses guanosine(1516) in 16S rRNA + S-adenosyl-L-methionine = N(2)-methylguanosine(1516) in 16S rRNA + S-adenosyl-L-homocysteine + H(+). Its function is as follows. Specifically methylates the guanosine in position 1516 of 16S rRNA. The polypeptide is Ribosomal RNA small subunit methyltransferase J (Pseudoalteromonas atlantica (strain T6c / ATCC BAA-1087)).